The primary structure comprises 208 residues: dITP/XTP pyrophosphatase (208 aa).

Ser-15–Lys-20 lines the substrate pocket. Positions 47 and 76 each coordinate Mg(2+). Asp-76 serves as the catalytic Proton acceptor. Residues Ser-77, His-157 to Asp-160, Lys-180, and His-185 to Arg-186 each bind substrate.

The protein belongs to the HAM1 NTPase family. Homodimer. The cofactor is Mg(2+).

It carries out the reaction XTP + H2O = XMP + diphosphate + H(+). It catalyses the reaction dITP + H2O = dIMP + diphosphate + H(+). The catalysed reaction is ITP + H2O = IMP + diphosphate + H(+). In terms of biological role, pyrophosphatase that catalyzes the hydrolysis of nucleoside triphosphates to their monophosphate derivatives, with a high preference for the non-canonical purine nucleotides XTP (xanthosine triphosphate), dITP (deoxyinosine triphosphate) and ITP. Seems to function as a house-cleaning enzyme that removes non-canonical purine nucleotides from the nucleotide pool, thus preventing their incorporation into DNA/RNA and avoiding chromosomal lesions. This chain is dITP/XTP pyrophosphatase, found in Gluconobacter oxydans (strain 621H) (Gluconobacter suboxydans).